The following is a 313-amino-acid chain: Porphobilinogen deaminase (313 aa).

Cysteine 242 carries the S-(dipyrrolylmethanemethyl)cysteine modification.

This sequence belongs to the HMBS family. As to quaternary structure, monomer. Requires dipyrromethane as cofactor.

The enzyme catalyses 4 porphobilinogen + H2O = hydroxymethylbilane + 4 NH4(+). The protein operates within porphyrin-containing compound metabolism; protoporphyrin-IX biosynthesis; coproporphyrinogen-III from 5-aminolevulinate: step 2/4. Its function is as follows. Tetrapolymerization of the monopyrrole PBG into the hydroxymethylbilane pre-uroporphyrinogen in several discrete steps. This chain is Porphobilinogen deaminase, found in Pseudomonas syringae pv. syringae (strain B728a).